Here is a 686-residue protein sequence, read N- to C-terminus: Heat shock 70 kDa protein 12B (686 aa).

A disordered region spans residues leucine 12–alanine 53. Serine 25 and serine 29 each carry phosphoserine. Threonine 42 is subject to Phosphothreonine. Residues serine 44, serine 46, and serine 276 each carry the phosphoserine modification.

The protein belongs to the heat shock protein 70 family. In terms of tissue distribution, highest expression in muscle and heart. Lower levels in liver and kidney.

The sequence is that of Heat shock 70 kDa protein 12B (HSPA12B) from Homo sapiens (Human).